The following is a 104-amino-acid chain: Large ribosomal subunit protein bL21 (104 aa).

The protein belongs to the bacterial ribosomal protein bL21 family. In terms of assembly, part of the 50S ribosomal subunit. Contacts protein L20.

Its function is as follows. This protein binds to 23S rRNA in the presence of protein L20. The sequence is that of Large ribosomal subunit protein bL21 from Caldanaerobacter subterraneus subsp. tengcongensis (strain DSM 15242 / JCM 11007 / NBRC 100824 / MB4) (Thermoanaerobacter tengcongensis).